The following is a 142-amino-acid chain: Transcriptional regulator MraZ (142 aa).

SpoVT-AbrB domains follow at residues 5–47 (EFQH…PQHE) and 76–119 (ATEC…SKEE).

This sequence belongs to the MraZ family. As to quaternary structure, forms oligomers.

The protein localises to the cytoplasm. The protein resides in the nucleoid. This Desulforamulus reducens (strain ATCC BAA-1160 / DSM 100696 / MI-1) (Desulfotomaculum reducens) protein is Transcriptional regulator MraZ.